Reading from the N-terminus, the 73-residue chain is Cx9C motif-containing protein 4, mitochondrial (73 aa).

The region spanning 2–44 is the CHCH domain; that stretch reads SNPCQKEACAIQDCLLSHQYDDAKCAKVIDQLYICCSKFYNDN. 2 short sequence motifs (cx9C motif) span residues 5 to 15 and 26 to 36; these read CQKEACAIQDC and CAKVIDQLYIC. Cystine bridges form between cysteine 5–cysteine 36 and cysteine 15–cysteine 26.

Belongs to the CMC4 family.

The protein localises to the mitochondrion intermembrane space. This Saccharomyces cerevisiae (strain ATCC 204508 / S288c) (Baker's yeast) protein is Cx9C motif-containing protein 4, mitochondrial (CMC4).